Consider the following 198-residue polypeptide: Peptide deformylase (198 aa).

Fe cation-binding residues include Cys123 and His170. The active site involves Glu171. Position 174 (His174) interacts with Fe cation.

It belongs to the polypeptide deformylase family. The cofactor is Fe(2+).

The enzyme catalyses N-terminal N-formyl-L-methionyl-[peptide] + H2O = N-terminal L-methionyl-[peptide] + formate. In terms of biological role, removes the formyl group from the N-terminal Met of newly synthesized proteins. Requires at least a dipeptide for an efficient rate of reaction. N-terminal L-methionine is a prerequisite for activity but the enzyme has broad specificity at other positions. The protein is Peptide deformylase of Mycoplasmopsis pulmonis (strain UAB CTIP) (Mycoplasma pulmonis).